Reading from the N-terminus, the 137-residue chain is Large-conductance mechanosensitive channel (137 aa).

A run of 3 helical transmembrane segments spans residues 15-35 (IDLAIGVIIGGAFGGLVNSIV), 38-58 (IFMPIIGLITGGIDFSNMFIQ), and 80-100 (GNFITLLINFLIIAWVLFLFV).

Belongs to the MscL family. In terms of assembly, homopentamer.

It is found in the cell inner membrane. Functionally, channel that opens in response to stretch forces in the membrane lipid bilayer. May participate in the regulation of osmotic pressure changes within the cell. The chain is Large-conductance mechanosensitive channel from Bartonella henselae (strain ATCC 49882 / DSM 28221 / CCUG 30454 / Houston 1) (Rochalimaea henselae).